The primary structure comprises 467 residues: ATP-dependent protease ATPase subunit HslU (467 aa).

Residues I20, 62-67 (GVGKTE), D280, E345, and R417 each bind ATP.

Belongs to the ClpX chaperone family. HslU subfamily. A double ring-shaped homohexamer of HslV is capped on each side by a ring-shaped HslU homohexamer. The assembly of the HslU/HslV complex is dependent on binding of ATP.

It localises to the cytoplasm. In terms of biological role, ATPase subunit of a proteasome-like degradation complex; this subunit has chaperone activity. The binding of ATP and its subsequent hydrolysis by HslU are essential for unfolding of protein substrates subsequently hydrolyzed by HslV. HslU recognizes the N-terminal part of its protein substrates and unfolds these before they are guided to HslV for hydrolysis. The sequence is that of ATP-dependent protease ATPase subunit HslU from Ligilactobacillus salivarius (strain UCC118) (Lactobacillus salivarius).